We begin with the raw amino-acid sequence, 409 residues long: Nucleoprotein (409 aa).

4 disordered regions span residues 1-31, 44-84, 164-196, and 238-258; these read MASG…GSSG, LNSP…KGGR, RSGR…EDDL, and VDQV…DDKM. The span at 15–31 shows a compositional bias: low complexity; the sequence is PVIKLGGPKPPKVGSSG. Residues 29-160 form an RNA-binding region; that stretch reads SSGNVSWFQA…GNFRWDFIPL (132 aa). The CoV N NTD domain occupies 31 to 156; sequence GNVSWFQAIK…GGPDGNFRWD (126 aa). The span at 70-84 shows a compositional bias: basic residues; that stretch reads YWRRQARFKPGKGGR. Residues 166 to 179 are compositionally biased toward low complexity; sequence GRSTAASSAASSRA. Basic and acidic residues-rich tracts occupy residues 180-192 and 247-258; these read PSRE…RSGS and KGKEGNFGDDKM. Phosphoserine; by host is present on residues S190 and S192. A CoV N CTD domain is found at 215–331; that stretch reads TKAKADEMAH…QCVDGVGTRP (117 aa). The segment at 226 to 333 is dimerization; that stretch reads RYCKRTIPPN…VDGVGTRPKD (108 aa). C320 and C323 form a disulfide bridge. Residues 326-409 form a disordered region; sequence GVGTRPKDDE…GDSALGENEL (84 aa). Basic residues predominate over residues 358–367; the sequence is QRPKKEKKPK. Residues 368–384 are compositionally biased toward basic and acidic residues; sequence KQDDEVDKALTSDEERN. A Phosphothreonine; by host modification is found at T378. Position 379 is a phosphoserine; by host (S379).

The protein belongs to the gammacoronavirus nucleocapsid protein family. As to quaternary structure, homooligomer. Both monomeric and oligomeric forms interact with RNA. Interacts with protein M. Interacts with NSP3; this interaction serves to tether the genome to the newly translated replicase-transcriptase complex at a very early stage of infection. ADP-ribosylated. The ADP-ribosylation is retained in the virion during infection. In terms of processing, phosphorylated on serine and threonine residues.

The protein resides in the virion. Its subcellular location is the host endoplasmic reticulum-Golgi intermediate compartment. It is found in the host Golgi apparatus. In terms of biological role, packages the positive strand viral genome RNA into a helical ribonucleocapsid (RNP) and plays a fundamental role during virion assembly through its interactions with the viral genome and membrane protein M. Plays an important role in enhancing the efficiency of subgenomic viral RNA transcription as well as viral replication. The polypeptide is Nucleoprotein (Gallus gallus (Chicken)).